The primary structure comprises 842 residues: Elongation factor 2 (842 aa).

A tr-type G domain is found at 17–253 (TNVRNMSVIA…LWGDSYFNPK (237 aa)). Residues 26–33 (AHVDHGKS), 158–161 (NKVD), and 213–215 (SGL) each bind GTP. His-699 carries the post-translational modification Diphthamide.

Belongs to the TRAFAC class translation factor GTPase superfamily. Classic translation factor GTPase family. EF-G/EF-2 subfamily.

It is found in the cytoplasm. It catalyses the reaction GTP + H2O = GDP + phosphate + H(+). Catalyzes the GTP-dependent ribosomal translocation step during translation elongation. During this step, the ribosome changes from the pre-translocational (PRE) to the post-translocational (POST) state as the newly formed A-site-bound peptidyl-tRNA and P-site-bound deacylated tRNA move to the P and E sites, respectively. Catalyzes the coordinated movement of the two tRNA molecules, the mRNA and conformational changes in the ribosome. The sequence is that of Elongation factor 2 (EFT1) from Eremothecium gossypii (strain ATCC 10895 / CBS 109.51 / FGSC 9923 / NRRL Y-1056) (Yeast).